We begin with the raw amino-acid sequence, 228 residues long: Ribonuclease 3 (228 aa).

Positions 5-127 (KDALQDRLGY…LFGAIYLDGG (123 aa)) constitute an RNase III domain. Residue glutamate 40 participates in Mg(2+) binding. Residue aspartate 44 is part of the active site. Residues aspartate 113 and glutamate 116 each contribute to the Mg(2+) site. Residue glutamate 116 is part of the active site. In terms of domain architecture, DRBM spans 154 to 224 (DPKTRLQEHL…AEQMLKRLED (71 aa)). The interval 200–228 (AEGEAGSRRKAEQQAAEQMLKRLEDKHER) is disordered. Residues 218 to 228 (MLKRLEDKHER) show a composition bias toward basic and acidic residues.

Belongs to the ribonuclease III family. Homodimer. Requires Mg(2+) as cofactor.

Its subcellular location is the cytoplasm. The enzyme catalyses Endonucleolytic cleavage to 5'-phosphomonoester.. Its function is as follows. Digests double-stranded RNA. Involved in the processing of primary rRNA transcript to yield the immediate precursors to the large and small rRNAs (23S and 16S). Processes some mRNAs, and tRNAs when they are encoded in the rRNA operon. Processes pre-crRNA and tracrRNA of type II CRISPR loci if present in the organism. This is Ribonuclease 3 from Alkalilimnicola ehrlichii (strain ATCC BAA-1101 / DSM 17681 / MLHE-1).